We begin with the raw amino-acid sequence, 365 residues long: Fructose-1,6-bisphosphate aldolase/phosphatase (365 aa).

The active-site Proton acceptor; for FBP phosphatase activity is the Asp-11. Asp-11, His-18, Asp-52, and Asp-53 together coordinate Mg(2+). Residue His-18 coordinates beta-D-fructose 1,6-bisphosphate. Residue His-18 participates in dihydroxyacetone phosphate binding. A beta-D-fructose 1,6-bisphosphate-binding site is contributed by Tyr-90. Gln-94 is a Mg(2+) binding site. Residue 103 to 104 coordinates beta-D-fructose 1,6-bisphosphate; sequence GN. Asp-131 contacts Mg(2+). A beta-D-fructose 1,6-bisphosphate-binding site is contributed by Lys-132. Lys-132 is a binding site for dihydroxyacetone phosphate. Tyr-228 acts as the Proton donor/acceptor; for FBP aldolase activity in catalysis. Residues Lys-231, Asp-232, and Asp-233 each coordinate Mg(2+). Catalysis depends on Lys-231, which acts as the Schiff-base intermediate with DHAP; for FBP aldolase activity. Residues 241 to 242, Arg-265, Asp-286, and Tyr-347 each bind beta-D-fructose 1,6-bisphosphate; that span reads QS. Positions 265 and 286 each coordinate dihydroxyacetone phosphate.

Belongs to the FBP aldolase/phosphatase family. In terms of assembly, homooctamer; dimer of tetramers. It depends on Mg(2+) as a cofactor.

It catalyses the reaction beta-D-fructose 1,6-bisphosphate + H2O = beta-D-fructose 6-phosphate + phosphate. It carries out the reaction beta-D-fructose 1,6-bisphosphate = D-glyceraldehyde 3-phosphate + dihydroxyacetone phosphate. The protein operates within carbohydrate biosynthesis; gluconeogenesis. Catalyzes two subsequent steps in gluconeogenesis: the aldol condensation of dihydroxyacetone phosphate (DHAP) and glyceraldehyde-3-phosphate (GA3P) to fructose-1,6-bisphosphate (FBP), and the dephosphorylation of FBP to fructose-6-phosphate (F6P). The chain is Fructose-1,6-bisphosphate aldolase/phosphatase from Methanothermobacter marburgensis (strain ATCC BAA-927 / DSM 2133 / JCM 14651 / NBRC 100331 / OCM 82 / Marburg) (Methanobacterium thermoautotrophicum).